We begin with the raw amino-acid sequence, 372 residues long: Cyclin-dependent kinase 9 (372 aa).

In terms of domain architecture, Protein kinase spans 19–315; the sequence is YEKLAKIGQG…SDDALNHDFF (297 aa). 25–33 serves as a coordination point for ATP; that stretch reads IGQGTFGEV. Lysine 44 carries the N6-acetyllysine; by EP300/CBP, PCAF/KAT2B and GCN5/KAT2A modification. Residues lysine 48 and 104–106 contribute to the ATP site; that span reads DFC. Lysine 48 carries the N6-acetyllysine; by PCAF/KAT2B and GCN5/KAT2A modification. Aspartate 149 serves as the catalytic Proton acceptor. The T-loop stretch occupies residues 166–191; the sequence is ADFGLARAFSLAKNSQPNRYTNRVVT. Aspartate 167 contacts ATP. Serine 175 is modified (phosphoserine). Residue threonine 186 is modified to Phosphothreonine; by CaMK1D. The tract at residues 343–372 is disordered; that stretch reads RRKGSQITQQSTNQSRNPATTNQTEFERVF. Residue serine 347 is modified to Phosphoserine; by CDK9 and PKA. The span at 347–366 shows a compositional bias: polar residues; it reads SQITQQSTNQSRNPATTNQT. Threonine 350 bears the Phosphothreonine; by CDK9 mark. Serine 353 is subject to Phosphoserine; by CDK9. Residue threonine 354 is modified to Phosphothreonine; by CDK9. Serine 357 carries the phosphoserine; by CDK9 modification. Phosphothreonine; by CDK9 is present on residues threonine 362 and threonine 363.

This sequence belongs to the protein kinase superfamily. CMGC Ser/Thr protein kinase family. CDC2/CDKX subfamily. As to quaternary structure, component of the super elongation complex (SEC), at least composed of EAF1, EAF2, CDK9, MLLT3/AF9, AFF (AFF1 or AFF4), the P-TEFb complex and ELL (ELL, ELL2 or ELL3). Associates with CCNT1/cyclin-T1, CCNT2/cyclin-T2 (isoform A and isoform B) or CCNK/cyclin-K to form active P-TEFb. P-TEFb forms a complex with AFF4/AF5Q31 and is part of the super elongation complex (SEC). Component of a complex which is composed of at least 5 members: HTATSF1/Tat-SF1, P-TEFb complex, RNA pol II, SUPT5H, and NCL/nucleolin. Associates with UBR5 and forms a transcription regulatory complex composed of CDK9, RNAP II, UBR5 and TFIIS/TCEA1 that can stimulate target gene transcription (e.g. gamma fibrinogen/FGG) by recruiting their promoters. Component of the 7SK snRNP inactive complex which is composed of at least 8 members: P-TEFb (composed of CDK9 and CCNT1/cyclin-T1), HEXIM1, HEXIM2, LARP7, BCDIN3, SART3 proteins and 7SK and U6 snRNAs. This inactive 7SK snRNP complex can also interact with NCOR1 and HDAC3, probably to regulate CDK9 acetylation. Release of P-TEFb from P-TEFb/7SK snRNP complex requires both PP2B to transduce calcium Ca(2+) signaling in response to stimuli (e.g. UV or hexamethylene bisacetamide (HMBA)), and PPP1CA to dephosphorylate Thr-186. This released P-TEFb remains inactive in the pre-initiation complex with BRD4 until new Thr-186 phosphorylation occurs after the synthesis of a short RNA. Interacts with BRD4; to target chromatin binding. Interacts with JMJD6. Interacts with activated nuclear STAT3 and RELA/p65. Binds to AR and MYOD1. Forms a complex composed of CDK9, CCNT1/cyclin-T1, EP300 and GATA4 that stimulates hypertrophy in cardiomyocytes. The large PER complex involved in the repression of transcriptional termination is composed of at least PER2, CDK9, DDX5, DHX9, NCBP1 and POLR2A. Interacts with HSF1. Interacts with TBX21. Interacts with WDR43. Interacts with ZMYND8; the association appears to occur between homodimeric ZMYND8 and the activated form of the P-TEFb complex. Post-translationally, autophosphorylation at Thr-186, Ser-347, Thr-350, Ser-353, Thr-354 and Ser-357 triggers kinase activity by promoting cyclin and substrate binding upon conformational changes. Thr-186 phosphorylation requires the calcium Ca(2+) signaling pathway, including CaMK1D and calmodulin. This inhibition is relieved by Thr-29 dephosphorylation. Phosphorylation at Ser-175 inhibits kinase activity. Can be phosphorylated on either Thr-362 or Thr-363 but not on both simultaneously. Dephosphorylation of Thr-186 by PPM1A and PPM1B blocks CDK9 activity and may lead to CDK9 proteasomal degradation. However, PPP1CA-mediated Thr-186 dephosphorylation is required to release P-TEFb from its inactive P-TEFb/7SK snRNP complex. Dephosphorylated at Ser-347 by the PNUTS-PP1 complex during RNA polymerase II transcription pause-release. Dephosphorylation of C-terminus Thr and Ser residues by protein phosphatase-1 (PP1) triggers CDK9 activity. In terms of processing, N6-acetylation of Lys-44 promotes kinase activity, whereas acetylation of both Lys-44 and Lys-48 mediated by PCAF/KAT2B and GCN5/KAT2A reduces kinase activity. The acetylated form associates with PML bodies in the nuclear matrix and with the transcriptionally silent HIV-1 genome; deacetylated upon transcription stimulation. Deacetylated by SIRT7, promoting the kinase activity and subsequent 'Ser-2' phosphorylation of the C-terminal domain (CTD) of RNA polymerase II. Post-translationally, polyubiquitinated and thus activated by UBR5. This ubiquitination is promoted by TFIIS/TCEA1 and favors 'Ser-2' phosphorylation of RPB1/POLR2A CTD.

The protein localises to the nucleus. The protein resides in the cytoplasm. It is found in the PML body. The enzyme catalyses L-seryl-[protein] + ATP = O-phospho-L-seryl-[protein] + ADP + H(+). It carries out the reaction L-threonyl-[protein] + ATP = O-phospho-L-threonyl-[protein] + ADP + H(+). It catalyses the reaction [DNA-directed RNA polymerase] + ATP = phospho-[DNA-directed RNA polymerase] + ADP + H(+). Its activity is regulated as follows. Activation by Thr-186 phosphorylation is calcium Ca(2+) signaling pathway-dependent; actively inactivated by dephosphorylation mediated by PPP1CA, PPM1A and PPM1B. Reversibly repressed by acetylation at Lys-44 and Lys-48. Protein kinase involved in the regulation of transcription. Member of the cyclin-dependent kinase pair (CDK9/cyclin-T) complex, also called positive transcription elongation factor b (P-TEFb), which facilitates the transition from abortive to productive elongation by phosphorylating the CTD (C-terminal domain) of the large subunit of RNA polymerase II (RNAP II) POLR2A, SUPT5H and RDBP. This complex is inactive when in the 7SK snRNP complex form. Phosphorylates EP300, MYOD1, RPB1/POLR2A and AR and the negative elongation factors DSIF and NELFE. Regulates cytokine inducible transcription networks by facilitating promoter recognition of target transcription factors (e.g. TNF-inducible RELA/p65 activation and IL-6-inducible STAT3 signaling). Promotes RNA synthesis in genetic programs for cell growth, differentiation and viral pathogenesis. P-TEFb is also involved in cotranscriptional histone modification, mRNA processing and mRNA export. Modulates a complex network of chromatin modifications including histone H2B monoubiquitination (H2Bub1), H3 lysine 4 trimethylation (H3K4me3) and H3K36me3; integrates phosphorylation during transcription with chromatin modifications to control co-transcriptional histone mRNA processing. The CDK9/cyclin-K complex has also a kinase activity towards CTD of RNAP II and can substitute for CDK9/cyclin-T P-TEFb in vitro. Replication stress response protein; the CDK9/cyclin-K complex is required for genome integrity maintenance, by promoting cell cycle recovery from replication arrest and limiting single-stranded DNA amount in response to replication stress, thus reducing the breakdown of stalled replication forks and avoiding DNA damage. In addition, probable function in DNA repair of isoform 2 via interaction with KU70/XRCC6. Promotes cardiac myocyte enlargement. RPB1/POLR2A phosphorylation on 'Ser-2' in CTD activates transcription. AR phosphorylation modulates AR transcription factor promoter selectivity and cell growth. DSIF and NELF phosphorylation promotes transcription by inhibiting their negative effect. The phosphorylation of MYOD1 enhances its transcriptional activity and thus promotes muscle differentiation. Catalyzes phosphorylation of KAT5, promoting KAT5 recruitment to chromatin and histone acetyltransferase activity. The polypeptide is Cyclin-dependent kinase 9 (CDK9) (Bos taurus (Bovine)).